Reading from the N-terminus, the 1363-residue chain is Insulin-like peptide receptor (1363 aa).

Residues 1–29 form the signal peptide; that stretch reads MRVVDKMAGLMWAALTLVIGLGLLVPSNG. N-linked (GlcNAc...) asparagine glycosylation is found at asparagine 51, asparagine 97, asparagine 137, asparagine 278, asparagine 483, asparagine 599, asparagine 617, asparagine 665, asparagine 666, asparagine 711, asparagine 732, asparagine 736, asparagine 743, asparagine 816, asparagine 885, and asparagine 898. Fibronectin type-III domains lie at 473–586 and 590–680; these read SFSR…TDAD and HPQD…CPKS. 2 consecutive Fibronectin type-III domains span residues 712-804 and 813-912; these read ETRA…LART and IPGN…VEEE. Over 721–928 the chain is Extracellular; that stretch reads ELPVTARPFY…QDPQQQVPVS (208 aa). Residues 739–759 are disordered; it reads LPSTNRTVPPTPTPNPNPQLE. A helical membrane pass occupies residues 929–949; that stretch reads LMIGMGVGFSLLLILAVIFGI. The Cytoplasmic portion of the chain corresponds to 950–1363; the sequence is WYCTKKRFGD…NLRIPKSTLC (414 aa). Residues 994–1283 enclose the Protein kinase domain; that stretch reads ITLIRELGQG…EIVEILSPEL (290 aa). Residues 1000-1008 and lysine 1028 each bind ATP; that span reads LGQGSFGMV. The segment at 1091 to 1117 is disordered; sequence PEEDVGLSDSPASNEAKNSPFAENDND. Catalysis depends on aspartate 1148, which acts as the Proton acceptor. The residue at position 1174 (tyrosine 1174) is a Phosphotyrosine; by autocatalysis. The segment at 1316–1363 is disordered; sequence DTETEMYPSGSEFSSTPSPPSETPYSHMNGSHPQNGSMNLRIPKSTLC. The span at 1322–1331 shows a compositional bias: low complexity; it reads YPSGSEFSST. The span at 1343 to 1353 shows a compositional bias: polar residues; sequence MNGSHPQNGSM.

It belongs to the protein kinase superfamily. Tyr protein kinase family. Insulin receptor subfamily. In terms of assembly, probable tetramer of 2 alpha and 2 beta chains linked by disulfide bonds. The alpha chains contribute to the formation of the ligand-binding domain, while the beta chains carry the kinase domain. Requires Mn(2+) as cofactor.

It localises to the membrane. The enzyme catalyses L-tyrosyl-[protein] + ATP = O-phospho-L-tyrosyl-[protein] + ADP + H(+). This receptor binds to the insulin related peptide and has a tyrosine-protein kinase activity. This chain is Insulin-like peptide receptor, found in Branchiostoma lanceolatum (Common lancelet).